The following is a 197-amino-acid chain: Isopentenyl-diphosphate Delta-isomerase (197 aa).

2 residues coordinate Mn(2+): His41 and His48. One can recognise a Nudix hydrolase domain in the interval Gln46–Ala183. The active site involves Cys83. Cys83 lines the Mg(2+) pocket. His85 provides a ligand contact to Mn(2+). Mg(2+) is bound at residue Glu103. Positions 130 and 132 each coordinate Mn(2+). Glu132 is a catalytic residue.

The protein belongs to the IPP isomerase type 1 family. Mg(2+) serves as cofactor. Requires Mn(2+) as cofactor.

Its subcellular location is the cytoplasm. It carries out the reaction isopentenyl diphosphate = dimethylallyl diphosphate. Its pathway is isoprenoid biosynthesis; dimethylallyl diphosphate biosynthesis; dimethylallyl diphosphate from isopentenyl diphosphate: step 1/1. Catalyzes the 1,3-allylic rearrangement of the homoallylic substrate isopentenyl (IPP) to its highly electrophilic allylic isomer, dimethylallyl diphosphate (DMAPP). This is Isopentenyl-diphosphate Delta-isomerase from Streptomyces avermitilis (strain ATCC 31267 / DSM 46492 / JCM 5070 / NBRC 14893 / NCIMB 12804 / NRRL 8165 / MA-4680).